The sequence spans 522 residues: Lysine--tRNA ligase (522 aa).

The 'HIGH' region signature appears at 44–52 (PSGLPHIGT). The 'KMSKS' region signature appears at 290–294 (KISKS). An ATP-binding site is contributed by Lys293.

It belongs to the class-I aminoacyl-tRNA synthetase family.

The protein localises to the cytoplasm. The catalysed reaction is tRNA(Lys) + L-lysine + ATP = L-lysyl-tRNA(Lys) + AMP + diphosphate. In Rickettsia conorii (strain ATCC VR-613 / Malish 7), this protein is Lysine--tRNA ligase.